The chain runs to 497 residues: Low affinity K(+) transporter 1 (497 aa).

Residues 1–29 are Extracellular-facing; it reads MFNHDWKYSINSKTFADLNIELFRNHKFK. A helical membrane pass occupies residues 30–50; that stretch reads TVLNYIIGVVGWNGLKLALFV. At 51–80 the chain is on the cytoplasmic side; it reads SDIYTCIKLLAFNSWSNNIIKPYLPFKISK. Residues 81–101 traverse the membrane as a helical segment; it reads WLFSGCILASIVLLIWEAIAG. The Extracellular segment spans residues 102-216; sequence MRIYKTGNIS…TNHEEAVILS (115 aa). The helical transmembrane segment at 217 to 237 threads the bilayer; sequence LMLFSFIIWALFVFKFLLAVI. The Cytoplasmic segment spans residues 238-497; sequence CSIFVYYKII…EDEDRTYNYT (260 aa). A phosphoserine mark is found at S291 and S319. The tract at residues 420–469 is disordered; that stretch reads EFHGPLDSMPNTTNNIRNFNSNSSRPRPPPLQTKSSINSKADSNDNGRIY. A compositionally biased stretch (low complexity) spans 429–444; the sequence is PNTTNNIRNFNSNSSR. The segment covering 451 to 465 has biased composition (polar residues); the sequence is QTKSSINSKADSNDN.

Belongs to the KCH1 low affinity K(+) transporter family.

It is found in the vacuole membrane. The protein resides in the cell membrane. The enzyme catalyses K(+)(in) = K(+)(out). Low affinity potassium transporter that, with PRM6/KCH2, participates in high-affinity Ca(2+) influx system (HACS) activation during the response to mating pheromone. Directly promotes K(+) influx and HACS may electrochemically respond to this K(+) influx. KCH1 and KCH2 act at the apex of the calcium signaling pathway that is used for survival during prolonged exposures to mating pheromones. The chain is Low affinity K(+) transporter 1 from Saccharomyces cerevisiae (strain ATCC 204508 / S288c) (Baker's yeast).